We begin with the raw amino-acid sequence, 209 residues long: Neurotrophin-4 (209 aa).

Residues 1-21 form the signal peptide; it reads MLPRHSCSLLLFLLLLPSVPM. A propeptide spanning residues 22–79 is cleaved from the precursor; sequence EPQPPSSTLPPFLAPEWDLLSPRVALSRGTPAGPPLLFLLEAGAYGEPAGAPANRSRR. A glycan (N-linked (GlcNAc...) asparagine) is linked at Asn75. 3 cysteine pairs are disulfide-bonded: Cys96/Cys169, Cys140/Cys198, and Cys157/Cys200.

It belongs to the NGF-beta family. As to expression, expressed in thymus, muscle, ovary, brain, heart, stomach and kidney. Expressed in both embryo and adult tissues.

It is found in the secreted. In terms of biological role, target-derived survival factor for peripheral sensory sympathetic neurons. May promote ameloblast differentiation and subsequent reduction in proliferation of ameloblasts. The protein is Neurotrophin-4 (Ntf4) of Rattus norvegicus (Rat).